The primary structure comprises 504 residues: Glycerol kinase (504 aa).

Thr12 lines the ADP pocket. Thr12, Thr13, and Ser14 together coordinate ATP. Residue Thr12 coordinates sn-glycerol 3-phosphate. Arg16 is a binding site for ADP. The sn-glycerol 3-phosphate site is built by Arg82, Glu83, Tyr134, and Asp246. Residues Arg82, Glu83, Tyr134, Asp246, and Gln247 each coordinate glycerol. 2 residues coordinate ADP: Thr268 and Gly312. ATP is bound by residues Thr268, Gly312, Gln316, and Gly413. ADP is bound by residues Gly413 and Asn417.

This sequence belongs to the FGGY kinase family.

The catalysed reaction is glycerol + ATP = sn-glycerol 3-phosphate + ADP + H(+). The protein operates within polyol metabolism; glycerol degradation via glycerol kinase pathway; sn-glycerol 3-phosphate from glycerol: step 1/1. Its activity is regulated as follows. Inhibited by fructose 1,6-bisphosphate (FBP). Functionally, key enzyme in the regulation of glycerol uptake and metabolism. Catalyzes the phosphorylation of glycerol to yield sn-glycerol 3-phosphate. The chain is Glycerol kinase from Renibacterium salmoninarum (strain ATCC 33209 / DSM 20767 / JCM 11484 / NBRC 15589 / NCIMB 2235).